A 1225-amino-acid chain; its full sequence is Cytosolic carboxypeptidase 1 (1225 aa).

Positions 366 to 392 are enriched in acidic residues; that stretch reads DDVVDESDDNEDTDAETEAEAENEDSD. The disordered stretch occupies residues 366–398; it reads DDVVDESDDNEDTDAETEAEAENEDSDQICKND. One can recognise a Peptidase M14 domain in the interval 842 to 1132; sequence YPYTYSTLKM…KFCVGLLRLK (291 aa). Positions 914, 917, and 1011 each coordinate Zn(2+). Residue Glu1096 is the Proton donor/acceptor of the active site. The segment covering 1181 to 1193 has biased composition (acidic residues); sequence YSAESNDDVDPDL. Positions 1181–1225 are disordered; sequence YSAESNDDVDPDLPENIGDFETSTLEEESFSDSEITRTHMSGQST.

Belongs to the peptidase M14 family. Requires Zn(2+) as cofactor.

It is found in the cytoplasm. The protein resides in the cytosol. The protein localises to the nucleus. Its subcellular location is the mitochondrion. The enzyme catalyses (L-glutamyl)(n+1)-gamma-L-glutamyl-L-glutamyl-[protein] + H2O = (L-glutamyl)(n)-gamma-L-glutamyl-L-glutamyl-[protein] + L-glutamate. It carries out the reaction C-terminal L-alpha-aminoacyl-L-glutamyl-L-glutamyl-[tubulin] + H2O = C-terminal L-alpha-aminoacyl-L-glutamyl-[tubulin] + L-glutamate. Metallocarboxypeptidase that mediates protein deglutamylation of tubulin and non-tubulin target proteins. Catalyzes the removal of polyglutamate side chains present on the gamma-carboxyl group of glutamate residues within the C-terminal tail of alpha- and beta-tubulin. Specifically cleaves tubulin long-side-chains, while it is not able to remove the branching point glutamate. Also catalyzes the removal of polyglutamate residues from the carboxy-terminus of alpha-tubulin as well as non-tubulin proteins. This is Cytosolic carboxypeptidase 1 (agtpbp1) from Xenopus laevis (African clawed frog).